The primary structure comprises 575 residues: NEDD4-binding protein 2-like 2 (575 aa).

Composition is skewed to basic and acidic residues over residues 69–87 (QEDK…EMPG), 129–142 (PPEK…KSET), and 149–167 (DSKR…KLEM). Disordered regions lie at residues 69–169 (QEDK…EMDT) and 555–575 (GEQR…ADDY). Residues 162–194 (SKKLEMDTELSQFYKEIEELENENEASQGSCTE) are a coiled coil. The span at 564 to 575 (GSHSQVSIADDY) shows a compositional bias: polar residues.

This Mus musculus (Mouse) protein is NEDD4-binding protein 2-like 2 (N4bp2l2).